Consider the following 269-residue polypeptide: Integral membrane protein 2C (269 aa).

Thr-39 is modified (phosphothreonine). A helical; Signal-anchor for type II membrane protein membrane pass occupies residues 57–77 (VGGVCYLSMGMVVLLMGLVFA). Positions 138-232 (FGGGDPADII…LCNGKDTYRL (95 aa)) constitute a BRICHOS domain. A disulfide bridge links Cys-165 with Cys-224. N-linked (GlcNAc...) asparagine glycosylation occurs at Asn-171.

Belongs to the ITM2 family. In terms of assembly, interacts with BACE1. Interacts with APP. Interacts with STMN2. Type I membrane-bound, as well as soluble, furin has a pre-eminent role in ITM2C proteolytic processing. PCSK7 and PCSK5 may also be involved although to a lesser extent. The soluble form of PCSK7 is incapable of processing ITM2C. Fails to undergo shedding by ADAM10 and intramembrane cleavage by SPPL2B.

The protein resides in the lysosome membrane. The protein localises to the cell membrane. Negative regulator of amyloid-beta peptide production. May inhibit the processing of APP by blocking its access to alpha- and beta-secretase. Binding to the beta-secretase-cleaved APP C-terminal fragment is negligible, suggesting that ITM2C is a poor gamma-secretase cleavage inhibitor. May play a role in TNF-induced cell death and neuronal differentiation. The protein is Integral membrane protein 2C (Itm2c) of Rattus norvegicus (Rat).